Reading from the N-terminus, the 312-residue chain is Glyceraldehyde-3-phosphate dehydrogenase, cytosolic (312 aa).

Residues 5–6 and D27 contribute to the NAD(+) site; that span reads RI. Residues 144-146, T175, 204-205, and R227 each bind D-glyceraldehyde 3-phosphate; these read SCT and TG. C145 functions as the Nucleophile in the catalytic mechanism. Residue N309 coordinates NAD(+).

It belongs to the glyceraldehyde-3-phosphate dehydrogenase family. As to quaternary structure, homotetramer.

It is found in the cytoplasm. It catalyses the reaction D-glyceraldehyde 3-phosphate + phosphate + NAD(+) = (2R)-3-phospho-glyceroyl phosphate + NADH + H(+). Its pathway is carbohydrate degradation; glycolysis; pyruvate from D-glyceraldehyde 3-phosphate: step 1/5. In terms of biological role, key enzyme in glycolysis that catalyzes the first step of the pathway by converting D-glyceraldehyde 3-phosphate (G3P) into 3-phospho-D-glyceroyl phosphate. Essential for the maintenance of cellular ATP levels and carbohydrate metabolism. This chain is Glyceraldehyde-3-phosphate dehydrogenase, cytosolic (GapC), found in Scenedesmus vacuolatus (Green alga).